The chain runs to 432 residues: Trigger factor (432 aa).

A PPIase FKBP-type domain is found at 161 to 246; it reads EDRVTIDFTG…LKKVEERGLP (86 aa).

The protein belongs to the FKBP-type PPIase family. Tig subfamily.

Its subcellular location is the cytoplasm. The catalysed reaction is [protein]-peptidylproline (omega=180) = [protein]-peptidylproline (omega=0). Functionally, involved in protein export. Acts as a chaperone by maintaining the newly synthesized protein in an open conformation. Functions as a peptidyl-prolyl cis-trans isomerase. This is Trigger factor from Salmonella choleraesuis (strain SC-B67).